The sequence spans 353 residues: Photosystem II protein D1 (353 aa).

A run of 3 helical transmembrane segments spans residues 29–46 (YVGW…TATI), 118–133 (HFLI…EWEL), and 142–156 (WICV…AATA). His-118 contributes to the chlorophyll a binding site. Pheophytin a is bound at residue Tyr-126. [CaMn4O5] cluster contacts are provided by Asp-170 and Glu-189. A helical membrane pass occupies residues 197–218 (FHMLGVAGVFGGSLFSAMHGSL). His-198 provides a ligand contact to chlorophyll a. Residues His-215 and 264-265 (SF) each bind a quinone. Fe cation is bound at residue His-215. His-272 contributes to the Fe cation binding site. Residues 274–288 (FLAAWPVVGIWFTSL) traverse the membrane as a helical segment. His-332, Glu-333, Asp-342, and Ala-344 together coordinate [CaMn4O5] cluster. A propeptide spanning residues 345–353 (AVKAPSIIG) is cleaved from the precursor.

It belongs to the reaction center PufL/M/PsbA/D family. In terms of assembly, PSII is composed of 1 copy each of membrane proteins PsbA, PsbB, PsbC, PsbD, PsbE, PsbF, PsbH, PsbI, PsbJ, PsbK, PsbL, PsbM, PsbT, PsbX, PsbY, PsbZ, Psb30/Ycf12, peripheral proteins PsbO, CyanoQ (PsbQ), PsbU, PsbV and a large number of cofactors. It forms dimeric complexes. It depends on The D1/D2 heterodimer binds P680, chlorophylls that are the primary electron donor of PSII, and subsequent electron acceptors. It shares a non-heme iron and each subunit binds pheophytin, quinone, additional chlorophylls, carotenoids and lipids. D1 provides most of the ligands for the Mn4-Ca-O5 cluster of the oxygen-evolving complex (OEC). There is also a Cl(-1) ion associated with D1 and D2, which is required for oxygen evolution. The PSII complex binds additional chlorophylls, carotenoids and specific lipids. as a cofactor. Post-translationally, tyr-161 forms a radical intermediate that is referred to as redox-active TyrZ, YZ or Y-Z. In terms of processing, C-terminally processed by CtpA; processing is essential to allow assembly of the oxygen-evolving complex and thus photosynthetic growth.

It localises to the cellular thylakoid membrane. It catalyses the reaction 2 a plastoquinone + 4 hnu + 2 H2O = 2 a plastoquinol + O2. Its function is as follows. Photosystem II (PSII) is a light-driven water:plastoquinone oxidoreductase that uses light energy to abstract electrons from H(2)O, generating O(2) and a proton gradient subsequently used for ATP formation. It consists of a core antenna complex that captures photons, and an electron transfer chain that converts photonic excitation into a charge separation. The D1/D2 (PsbA/PsbD) reaction center heterodimer binds P680, the primary electron donor of PSII as well as several subsequent electron acceptors. In Prochlorothrix hollandica, this protein is Photosystem II protein D1.